The sequence spans 330 residues: MNLDEYVRSLRGEVMGHHHGGPGRYEQKFKAFPISFLPKEKHSLESGGKILLPPSALNALSRLNIQYPMLFEISNPISGKKSHCGVLEFIAEEGICYLPLWMMQNLQLKEGEFIDIKNATLAKGTFVKIQPRTSNFIDISNPKAVLENSLRKFATLTKDDEIMIDYNNTKYYLKVVELKPANAISIIEADVSVDFAPPMDSKEATSPSTSSPGSHVSGPSKGLTFGPASTSAKPIPGGKKKKDESDSDSDSDDEPKFKAFAGTGARLDGKVGTPLGTSPKTLNTNNNNNNNNNNNNNNNNNNNNNSNNNNTKNEDTKFKSFSGKGHSLKD.

A disordered region spans residues 198 to 330 (PMDSKEATSP…FSGKGHSLKD (133 aa)). Low complexity-rich tracts occupy residues 206–222 (SPST…PSKG) and 283–310 (NTNN…NNNN).

It belongs to the UFD1 family.

It functions in the pathway protein degradation; proteasomal ubiquitin-dependent pathway. In terms of biological role, functions at a post-ubiquitation step in the ubiquitin fusion degradation (UFD) pathway. In Dictyostelium discoideum (Social amoeba), this protein is Ubiquitin fusion degradation protein 1 homolog (ufd1).